A 493-amino-acid chain; its full sequence is Galactose-1-phosphate uridylyltransferase 2 (493 aa).

The protein belongs to the galactose-1-phosphate uridylyltransferase type 2 family.

It localises to the cytoplasm. The catalysed reaction is alpha-D-galactose 1-phosphate + UDP-alpha-D-glucose = alpha-D-glucose 1-phosphate + UDP-alpha-D-galactose. It functions in the pathway carbohydrate metabolism; galactose metabolism. This chain is Galactose-1-phosphate uridylyltransferase 2 (galT2), found in Streptococcus pneumoniae serotype 4 (strain ATCC BAA-334 / TIGR4).